A 419-amino-acid chain; its full sequence is Putative zinc metalloprotease SPy_1963/M5005_Spy1674 (419 aa).

Histidine 18 is a Zn(2+) binding site. Glutamate 19 is an active-site residue. Position 22 (histidine 22) interacts with Zn(2+). The next 4 membrane-spanning stretches (helical) occupy residues 169–191, 301–323, 343–365, and 392–411; these read LITN…ILLV, LAWS…FSLN, LESV…LIPI, and AYIT…AVTW. One can recognise a PDZ domain in the interval 175-274; that stretch reads GPMNNFILGI…LKTVAVKPQK (100 aa).

It belongs to the peptidase M50B family. It depends on Zn(2+) as a cofactor.

It localises to the cell membrane. The chain is Putative zinc metalloprotease SPy_1963/M5005_Spy1674 from Streptococcus pyogenes serotype M1.